The following is a 464-amino-acid chain: MARTHLLFLLFVLLSLATSSTSTKEQEEDRIKALPGQPKVGFSQFSGYVTVNESHGRSLFYWLTESSSHSPHTKPLLLWLNGGPGCSSIAYGASEEIGPFRISKTGCNLYLNNFSWNTEANLLFLESPVGVGFSYTNTSSDFEESGDERTAQENLIFLISWMSRFPQYRYRDFYIVGESYAGHYVPQLAQKIHEYNNAYKNPVINLKGFMVGNPEMDKNNDRLGTITYWWSHAMISDASYNRILKNCDFTADRFSKECDSAIYVAAADFGDIDQYSIYTPKCVPPQDQTNQTKFEQMMQMHTTKRFLEDQYDPCTENYAEIYYNRPEVQRAMHANHTAIPYKWTACSDSVFNNWNWRDSDNSMLPIYKELIAAGLRIWVYSGDTDSVIPVTATRYSLGKLNLRVKTRWYPWYSGNQVGGRTEVYEGLTFVTVRGAGHEVPFFQPQSALILLRSFLAGNELSRSY.

The signal sequence occupies residues 1–22 (MARTHLLFLLFVLLSLATSSTS). 3 N-linked (GlcNAc...) asparagine glycosylation sites follow: Asn-52, Asn-113, and Asn-137. Cystine bridges form between Cys-86-Cys-346, Cys-247-Cys-258, and Cys-282-Cys-314. Residue Ser-179 is part of the active site. N-linked (GlcNAc...) asparagine glycans are attached at residues Asn-290 and Asn-335. Active-site residues include Asp-385 and His-437.

The protein belongs to the peptidase S10 family. Expression not detected.

It localises to the secreted. Functionally, probable carboxypeptidase. The sequence is that of Serine carboxypeptidase-like 22 (SCPL22) from Arabidopsis thaliana (Mouse-ear cress).